A 692-amino-acid chain; its full sequence is Formate hydrogenlyase transcriptional activator (692 aa).

The 143-residue stretch at 202 to 344 (DIDELVSEVA…QIAERVAIAV (143 aa)) folds into the GAF domain. The Sigma-54 factor interaction domain occupies 381 to 610 (IIGRSEAMYN…LENVVERAVL (230 aa)). ATP contacts are provided by residues 409–416 (GETGTGKE) and 472–481 (ADKSSLFLDE). Residues 663–682 (PKGAAQRLGLKRTTLLSRMK) constitute a DNA-binding region (H-T-H motif).

Functionally, required for induction of expression of the formate dehydrogenase H and hydrogenase-3 structural genes. The sequence is that of Formate hydrogenlyase transcriptional activator (fhlA) from Salmonella typhimurium (strain LT2 / SGSC1412 / ATCC 700720).